Reading from the N-terminus, the 323-residue chain is Delta(7)-sterol 5(6)-desaturase ERG3B (323 aa).

3 helical membrane passes run 67–87 (ASILMIAGFGAAFIYVISAAL), 112–132 (IQSSFFAIPIIDLLTLPFFLG), and 150–170 (SWLAISTILYMVFNDLGIYWI). Residues 157–285 (ILYMVFNDLG…YFTWADNYWG (129 aa)) form the Fatty acid hydroxylase domain. Positions 171 to 175 (HRLEH) match the Histidine box-1 motif. Residues 184–188 (HKPHH) carry the Histidine box-2 motif. Positions 262 to 266 (HTLHH) match the Histidine box-3 motif.

It belongs to the sterol desaturase family.

It is found in the endoplasmic reticulum membrane. It catalyses the reaction episterol + 2 Fe(II)-[cytochrome b5] + O2 + 2 H(+) = 5-dehydroepisterol + 2 Fe(III)-[cytochrome b5] + 2 H2O. Its pathway is steroid metabolism; ergosterol biosynthesis. Functionally, C-5 sterol desaturase; part of the third module of ergosterol biosynthesis pathway that includes the late steps of the pathway. ERG3A and ERG3BB catalyze the introduction of a C-5 double bond in the B ring to produce 5-dehydroepisterol. The third module or late pathway involves the ergosterol synthesis itself through consecutive reactions that mainly occur in the endoplasmic reticulum (ER) membrane. Firstly, the squalene synthase ERG9 catalyzes the condensation of 2 farnesyl pyrophosphate moieties to form squalene, which is the precursor of all steroids. Squalene synthase is crucial for balancing the incorporation of farnesyl diphosphate (FPP) into sterol and nonsterol isoprene synthesis. Secondly, squalene is converted into lanosterol by the consecutive action of the squalene epoxidase ERG1 and the lanosterol synthase ERG7. Then, the delta(24)-sterol C-methyltransferase ERG6 methylates lanosterol at C-24 to produce eburicol. Eburicol is the substrate of the sterol 14-alpha demethylase encoded by CYP51A, CYP51B and CYP51C, to yield 4,4,24-trimethyl ergosta-8,14,24(28)-trienol. CYP51B encodes the enzyme primarily responsible for sterol 14-alpha-demethylation, and plays an essential role in ascospore formation. CYP51A encodes an additional sterol 14-alpha-demethylase, induced on ergosterol depletion and responsible for the intrinsic variation in azole sensitivity. The third CYP51 isoform, CYP51C, does not encode a sterol 14-alpha-demethylase, but is required for full virulence on host wheat ears. The C-14 reductase ERG24 then reduces the C14=C15 double bond which leads to 4,4-dimethylfecosterol. A sequence of further demethylations at C-4, involving the C-4 demethylation complex containing the C-4 methylsterol oxidases ERG25, the sterol-4-alpha-carboxylate 3-dehydrogenase ERG26 and the 3-keto-steroid reductase ERG27, leads to the production of fecosterol via 4-methylfecosterol. ERG28 has a role as a scaffold to help anchor ERG25, ERG26 and ERG27 to the endoplasmic reticulum. The C-8 sterol isomerase ERG2 then catalyzes the reaction which results in unsaturation at C-7 in the B ring of sterols and thus converts fecosterol to episterol. The sterol-C5-desaturases ERG3A and ERG3BB then catalyze the introduction of a C-5 double bond in the B ring to produce 5-dehydroepisterol. The C-22 sterol desaturases ERG5A and ERG5B further convert 5-dehydroepisterol into ergosta-5,7,22,24(28)-tetraen-3beta-ol by forming the C-22(23) double bond in the sterol side chain. Finally, ergosta-5,7,22,24(28)-tetraen-3beta-ol is substrate of the C-24(28) sterol reductase ERG4 to produce ergosterol. The sequence is that of Delta(7)-sterol 5(6)-desaturase ERG3B from Gibberella zeae (strain ATCC MYA-4620 / CBS 123657 / FGSC 9075 / NRRL 31084 / PH-1) (Wheat head blight fungus).